Here is a 392-residue protein sequence, read N- to C-terminus: p21-activated protein kinase-interacting protein 1 (392 aa).

6 WD repeats span residues 33 to 72 (VADF…MKKK), 73 to 113 (IEHG…AKKW), 114 to 155 (ECLK…LVEG), 156 to 195 (RSAF…LDTA), 196 to 235 (SISG…CDSL), and 236 to 275 (VCLC…KMWK). The tract at residues 312-392 (SLPPAAEPSP…RKKKKIKTMQ (81 aa)) is disordered. At S320 the chain carries Phosphoserine. Over residues 325-345 (EQSKIGKKEPGDTVHKEEKRS) the composition is skewed to basic and acidic residues. A compositionally biased stretch (basic residues) spans 381 to 392 (KKRKKKKIKTMQ).

In terms of assembly, interacts with PAK1. Expressed in brain, colon, heart, kidney, liver, lung, muscle, peripheral blood leukocytes, placenta, small intestine, spleen and thymus.

The protein resides in the nucleus. The protein localises to the nucleolus. Functionally, negatively regulates the PAK1 kinase. PAK1 is a member of the PAK kinase family, which has been shown to play a positive role in the regulation of signaling pathways involving MAPK8 and RELA. PAK1 exists as an inactive homodimer, which is activated by binding of small GTPases such as CDC42 to an N-terminal regulatory domain. PAK1IP1 also binds to the N-terminus of PAK1, and inhibits the specific activation of PAK1 by CDC42. May be involved in ribosomal large subunit assembly. The chain is p21-activated protein kinase-interacting protein 1 (PAK1IP1) from Homo sapiens (Human).